The primary structure comprises 317 residues: 4-hydroxy-3-methylbut-2-enyl diphosphate reductase (317 aa).

Cys-12 lines the [4Fe-4S] cluster pocket. (2E)-4-hydroxy-3-methylbut-2-enyl diphosphate contacts are provided by His-41 and His-74. 2 residues coordinate dimethylallyl diphosphate: His-41 and His-74. 2 residues coordinate isopentenyl diphosphate: His-41 and His-74. Cys-97 provides a ligand contact to [4Fe-4S] cluster. Residue His-125 participates in (2E)-4-hydroxy-3-methylbut-2-enyl diphosphate binding. His-125 contributes to the dimethylallyl diphosphate binding site. His-125 contacts isopentenyl diphosphate. The active-site Proton donor is Glu-127. Thr-168 lines the (2E)-4-hydroxy-3-methylbut-2-enyl diphosphate pocket. Position 198 (Cys-198) interacts with [4Fe-4S] cluster. (2E)-4-hydroxy-3-methylbut-2-enyl diphosphate-binding residues include Ser-226, Ser-227, Asn-228, and Ser-270. Positions 226, 227, 228, and 270 each coordinate dimethylallyl diphosphate. Isopentenyl diphosphate is bound by residues Ser-226, Ser-227, Asn-228, and Ser-270.

The protein belongs to the IspH family. Homodimer. The cofactor is [4Fe-4S] cluster.

It carries out the reaction isopentenyl diphosphate + 2 oxidized [2Fe-2S]-[ferredoxin] + H2O = (2E)-4-hydroxy-3-methylbut-2-enyl diphosphate + 2 reduced [2Fe-2S]-[ferredoxin] + 2 H(+). The enzyme catalyses dimethylallyl diphosphate + 2 oxidized [2Fe-2S]-[ferredoxin] + H2O = (2E)-4-hydroxy-3-methylbut-2-enyl diphosphate + 2 reduced [2Fe-2S]-[ferredoxin] + 2 H(+). It functions in the pathway isoprenoid biosynthesis; dimethylallyl diphosphate biosynthesis; dimethylallyl diphosphate from (2E)-4-hydroxy-3-methylbutenyl diphosphate: step 1/1. Its pathway is isoprenoid biosynthesis; isopentenyl diphosphate biosynthesis via DXP pathway; isopentenyl diphosphate from 1-deoxy-D-xylulose 5-phosphate: step 6/6. Its function is as follows. Catalyzes the conversion of 1-hydroxy-2-methyl-2-(E)-butenyl 4-diphosphate (HMBPP) into a mixture of isopentenyl diphosphate (IPP) and dimethylallyl diphosphate (DMAPP). Acts in the terminal step of the DOXP/MEP pathway for isoprenoid precursor biosynthesis. This is 4-hydroxy-3-methylbut-2-enyl diphosphate reductase from Yersinia pseudotuberculosis serotype IB (strain PB1/+).